Consider the following 752-residue polypeptide: Reticulon-1-B (752 aa).

Disordered stretches follow at residues 1–57 (MAAN…TSTD), 264–319 (EYPG…SEKQ), 334–424 (KAKE…SPSI), and 444–465 (ESCD…SPMM). The segment covering 264-273 (EYPGNQQGKS) has biased composition (polar residues). Residues 334-361 (KAKEGTKRFSSETNDEKQSRSFHAEKQD) are compositionally biased toward basic and acidic residues. Positions 363 to 383 (TVMSTEATSASHYTKASSAES) are enriched in polar residues. The 187-residue stretch at 566–752 (AIDLLYWRDV…AKIPGTKQKE (187 aa)) folds into the Reticulon domain. A run of 2 helical transmembrane segments spans residues 580–600 (IVFG…VVSV) and 684–704 (VLMW…LLIM).

Isoform A and isoform C are both expressed in the animal hemisphere (presumptive neural ectoderm) of blastula and gastrula stage embryos, and along the anterior neural border, in the panplacodal primordium, and in the dorsolateral side of archenteron roof of late neurula embryos. At the tailbud stage, expression of the isoforms begin to differ. Isoform A localizes to the cranial placodes including the trigeminal placode, lateral line placode, olfactory placode and otic vesicle. Isoform C localizes to the central nervous system, including the spinal cord, prosencephalon, mesencephalon and rhombencephalon, as well as the lateral line placode, otic vesicle and pronephros.

It is found in the endoplasmic reticulum membrane. The protein localises to the nucleus. Its function is as follows. Inhibits amyloid precursor protein processing, probably by blocking BACE1 activity. In Xenopus laevis (African clawed frog), this protein is Reticulon-1-B (rtn1-b).